Here is a 229-residue protein sequence, read N- to C-terminus: tRNA (guanine-N(7)-)-methyltransferase (229 aa).

The S-adenosyl-L-methionine site is built by Glu-62, Glu-87, Asp-114, and Asp-137. Asp-137 is an active-site residue. Lys-141 provides a ligand contact to substrate. The tract at residues 143–148 (KHNKRR) is interaction with RNA. Residues Asp-173 and 208–211 (TKFE) each bind substrate.

It belongs to the class I-like SAM-binding methyltransferase superfamily. TrmB family.

The enzyme catalyses guanosine(46) in tRNA + S-adenosyl-L-methionine = N(7)-methylguanosine(46) in tRNA + S-adenosyl-L-homocysteine. The protein operates within tRNA modification; N(7)-methylguanine-tRNA biosynthesis. Functionally, catalyzes the formation of N(7)-methylguanine at position 46 (m7G46) in tRNA. This is tRNA (guanine-N(7)-)-methyltransferase from Francisella philomiragia subsp. philomiragia (strain ATCC 25017 / CCUG 19701 / FSC 153 / O#319-036).